Reading from the N-terminus, the 33-residue chain is Photosystem II reaction center protein Psb30 (33 aa).

Residues 5 to 25 traverse the membrane as a helical segment; sequence LITQLASLILIVASGPIVIGL.

It belongs to the Psb30/Ycf12 family. As to quaternary structure, PSII is composed of 1 copy each of membrane proteins PsbA, PsbB, PsbC, PsbD, PsbE, PsbF, PsbH, PsbI, PsbJ, PsbK, PsbL, PsbM, PsbT, PsbX, PsbY, PsbZ, Psb30/Ycf12, peripheral proteins of the oxygen-evolving complex and a large number of cofactors. It forms dimeric complexes.

It is found in the plastid. It localises to the chloroplast thylakoid membrane. A core subunit of photosystem II (PSII), probably helps stabilize the reaction center. The chain is Photosystem II reaction center protein Psb30 from Lepocinclis buetschlii.